Here is a 556-residue protein sequence, read N- to C-terminus: Arginine--tRNA ligase 2 (556 aa).

The short motif at 132–142 (ANPTGDLHLGH) is the 'HIGH' region element.

The protein belongs to the class-I aminoacyl-tRNA synthetase family. As to quaternary structure, monomer.

It localises to the cytoplasm. It carries out the reaction tRNA(Arg) + L-arginine + ATP = L-arginyl-tRNA(Arg) + AMP + diphosphate. The protein is Arginine--tRNA ligase 2 of Bacillus thuringiensis subsp. konkukian (strain 97-27).